The primary structure comprises 174 residues: RNA pyrophosphohydrolase (174 aa).

One can recognise a Nudix hydrolase domain in the interval Gly-6 to Lys-150. Positions Gly-38–Gly-59 match the Nudix box motif.

Belongs to the Nudix hydrolase family. RppH subfamily. It depends on a divalent metal cation as a cofactor.

Functionally, accelerates the degradation of transcripts by removing pyrophosphate from the 5'-end of triphosphorylated RNA, leading to a more labile monophosphorylated state that can stimulate subsequent ribonuclease cleavage. The chain is RNA pyrophosphohydrolase from Tolumonas auensis (strain DSM 9187 / NBRC 110442 / TA 4).